Consider the following 157-residue polypeptide: Small ribosomal subunit protein bS16 (157 aa).

Positions 125-141 (KRKAAKKAAEEAAAKEA) are enriched in basic and acidic residues. Residues 125–157 (KRKAAKKAAEEAAAKEAEAEEAAEDKAEEESAE) form a disordered region. Acidic residues predominate over residues 142–157 (EAEEAAEDKAEEESAE).

This sequence belongs to the bacterial ribosomal protein bS16 family.

The chain is Small ribosomal subunit protein bS16 from Corynebacterium kroppenstedtii (strain DSM 44385 / JCM 11950 / CIP 105744 / CCUG 35717).